The primary structure comprises 957 residues: Glycine dehydrogenase (decarboxylating) (957 aa).

Lys708 is modified (N6-(pyridoxal phosphate)lysine).

This sequence belongs to the GcvP family. As to quaternary structure, the glycine cleavage system is composed of four proteins: P, T, L and H. Requires pyridoxal 5'-phosphate as cofactor.

The enzyme catalyses N(6)-[(R)-lipoyl]-L-lysyl-[glycine-cleavage complex H protein] + glycine + H(+) = N(6)-[(R)-S(8)-aminomethyldihydrolipoyl]-L-lysyl-[glycine-cleavage complex H protein] + CO2. In terms of biological role, the glycine cleavage system catalyzes the degradation of glycine. The P protein binds the alpha-amino group of glycine through its pyridoxal phosphate cofactor; CO(2) is released and the remaining methylamine moiety is then transferred to the lipoamide cofactor of the H protein. The protein is Glycine dehydrogenase (decarboxylating) of Salmonella typhi.